The following is a 327-amino-acid chain: Probable cell division protein WhiA (327 aa).

The segment at residues 275–308 is a DNA-binding region (H-T-H motif); the sequence is SLEELGRLADPPMTKDAVAGRIRRLLSMADRKAK. The segment at 304 to 327 is disordered; the sequence is DRKAKQDGIPDTESAVTPDLLEDA.

Belongs to the WhiA family.

In terms of biological role, involved in cell division and chromosome segregation. The sequence is that of Probable cell division protein WhiA from Mycobacterium sp. (strain MCS).